Reading from the N-terminus, the 883-residue chain is Phosphoenolpyruvate carboxylase (883 aa).

Residues His-138 and Lys-546 contribute to the active site.

The protein belongs to the PEPCase type 1 family. Requires Mg(2+) as cofactor.

It catalyses the reaction oxaloacetate + phosphate = phosphoenolpyruvate + hydrogencarbonate. Functionally, forms oxaloacetate, a four-carbon dicarboxylic acid source for the tricarboxylic acid cycle. This chain is Phosphoenolpyruvate carboxylase, found in Salmonella schwarzengrund (strain CVM19633).